The following is an 898-amino-acid chain: Vacuolar protein sorting-associated protein 41 homolog (898 aa).

Positions 1–10 (MDESNDKENE) are enriched in basic and acidic residues. Positions 1 to 35 (MDESNDKENEFGDSFLEDSGDITRTTEDEDEAPLE) are disordered. A CHCR repeat occupies 614-756 (LRLLLDNADS…VADFPTHFSQ (143 aa)). The RING-type; atypical zinc-finger motif lies at 835–890 (CSLCSQVIMNTGQDMIPRKFNDIKVFKCGHIFHLTCSASEIDRRQMIEDGICIACS).

This sequence belongs to the VPS41 family. In terms of assembly, probable component of the homotypic fusion and vacuole protein sorting (HOPS) complex consisting of the core class C Vps proteins vps-11, vps-16, vps-18, and which further associates with vps-33.1, vps-39 and vps-41.

It localises to the endosome membrane. Its subcellular location is the late endosome. It is found in the lysosome. The protein localises to the golgi apparatus. The protein resides in the trans-Golgi network. It localises to the early endosome. Its subcellular location is the cytoplasmic vesicle. It is found in the clathrin-coated vesicle. Functionally, plays a role in vesicle-mediated protein trafficking to lysosomal compartments including the endocytic membrane transport pathways. Believed to act in part as a core component of the putative HOPS endosomal tethering complex which is proposed to be involved in the rab-5-to-rab-7 endosome conversion probably implicating sand-1, and via binding SNAREs and SNARE complexes to mediate tethering and docking events during SNARE-mediated membrane fusion. The HOPS complex is proposed to be recruited to rab-7 on the late endosomal membrane and to regulate late endocytic, phagocytic and autophagic traffic towards lysosomes. Within the HOPS complex, contributes to the normal development of gut granules in the adult intestine. May mediate the tethering of autophagosomes with lysosomes. Has a role in the negative regulation of apoptosis. Required for uptake of exogenous dsRNA which is used in experimental RNA silencing. The chain is Vacuolar protein sorting-associated protein 41 homolog from Caenorhabditis briggsae.